The sequence spans 186 residues: UPF0301 protein Sfri_2850 (186 aa).

Belongs to the UPF0301 (AlgH) family.

This is UPF0301 protein Sfri_2850 from Shewanella frigidimarina (strain NCIMB 400).